We begin with the raw amino-acid sequence, 174 residues long: Protein C2-DOMAIN ABA-RELATED 2 (174 aa).

Position 1 is an N-acetylmethionine (Met1). The C2 domain occupies 1 to 104 (MENMLGLLRL…EAIRIQNQLG (104 aa)). Residues Arg21, Asp22, Asp27, Asp73, Arg74, Asp75, and Asp81 each coordinate Ca(2+).

Belongs to the plant CAR protein family. Binds to PYR/PYL/RCAR abscisic acid intracellular receptors in an ABA-independent manner, both at the plasma membrane and in the nucleus. Requires Ca(2+) as cofactor.

The protein resides in the cell membrane. It localises to the nucleus. In terms of biological role, stimulates the GTPase/ATPase activities of Obg-like ATPases. Mediates the transient calcium-dependent interaction of PYR/PYL/RCAR abscisic acid (ABA) receptors with the plasma membrane and thus regulates ABA sensitivity. This is Protein C2-DOMAIN ABA-RELATED 2 from Arabidopsis thaliana (Mouse-ear cress).